Reading from the N-terminus, the 991-residue chain is Translation initiation factor IF-2 (991 aa).

Disordered regions lie at residues 58–82 (EGKKITLTRRQTSEIRQADATGRSR) and 106–405 (QARA…PAPQ). A compositionally biased stretch (low complexity) spans 106–164 (QARADAAASDAAPAEPAPAAAEPSASAPVTAPVNAPAADAPQAPATAAPDTAAPAAETP). The span at 165 to 175 (SQPPAVEPQPA) shows a compositional bias: pro residues. Composition is skewed to low complexity over residues 190-206 (AKPAEAPAEPAAPAAVE), 221-258 (AVQAEIETAPAPAAESAQAARPEPVTPKAEPAPAASKP), and 267-276 (APVPVAAPAV). A compositionally biased stretch (basic and acidic residues) spans 279-289 (AGREEARRAAE). The span at 379–388 (RAGGKGGKGG) shows a compositional bias: gly residues. Over residues 395–405 (QAERRHEPAPQ) the composition is skewed to basic and acidic residues. The 168-residue stretch at 492–659 (PRAPVVTVMG…NVLLQAEILE (168 aa)) folds into the tr-type G domain. The tract at residues 501-508 (GHVDHGKT) is G1. 501-508 (GHVDHGKT) is a GTP binding site. A G2 region spans residues 526–530 (GITQH). Positions 547 to 550 (DTPG) are G3. Residues 547–551 (DTPGH) and 601–604 (NKID) each bind GTP. The G4 stretch occupies residues 601-604 (NKID). Residues 637–639 (SAK) form a G5 region.

This sequence belongs to the TRAFAC class translation factor GTPase superfamily. Classic translation factor GTPase family. IF-2 subfamily.

Its subcellular location is the cytoplasm. Its function is as follows. One of the essential components for the initiation of protein synthesis. Protects formylmethionyl-tRNA from spontaneous hydrolysis and promotes its binding to the 30S ribosomal subunits. Also involved in the hydrolysis of GTP during the formation of the 70S ribosomal complex. This chain is Translation initiation factor IF-2, found in Bordetella petrii (strain ATCC BAA-461 / DSM 12804 / CCUG 43448).